Consider the following 137-residue polypeptide: Small ribosomal subunit protein uS12 (137 aa).

The interval 1–57 (MPTINQLVRKPRQSKSKKSDSPVLNRGFNSKKKQFTNLNSPQKRGVCTRVGTMTPRK) is disordered. A 3-methylthioaspartic acid modification is found at Asp-102. A disordered region spans residues 118–137 (SGVDGRRQGRSLYGTKKPKN).

It belongs to the universal ribosomal protein uS12 family. Part of the 30S ribosomal subunit. Contacts proteins S8 and S17. May interact with IF1 in the 30S initiation complex.

Its function is as follows. With S4 and S5 plays an important role in translational accuracy. In terms of biological role, interacts with and stabilizes bases of the 16S rRNA that are involved in tRNA selection in the A site and with the mRNA backbone. Located at the interface of the 30S and 50S subunits, it traverses the body of the 30S subunit contacting proteins on the other side and probably holding the rRNA structure together. The combined cluster of proteins S8, S12 and S17 appears to hold together the shoulder and platform of the 30S subunit. This Staphylococcus haemolyticus (strain JCSC1435) protein is Small ribosomal subunit protein uS12.